A 175-amino-acid chain; its full sequence is Methylated-DNA--protein-cysteine methyltransferase (175 aa).

C142 acts as the Nucleophile; methyl group acceptor in catalysis.

The protein belongs to the MGMT family.

The protein resides in the cytoplasm. It catalyses the reaction a 6-O-methyl-2'-deoxyguanosine in DNA + L-cysteinyl-[protein] = S-methyl-L-cysteinyl-[protein] + a 2'-deoxyguanosine in DNA. The catalysed reaction is a 4-O-methyl-thymidine in DNA + L-cysteinyl-[protein] = a thymidine in DNA + S-methyl-L-cysteinyl-[protein]. Involved in the cellular defense against the biological effects of O6-methylguanine (O6-MeG) and O4-methylthymine (O4-MeT) in DNA. Repairs the methylated nucleobase in DNA by stoichiometrically transferring the methyl group to a cysteine residue in the enzyme. This is a suicide reaction: the enzyme is irreversibly inactivated. The polypeptide is Methylated-DNA--protein-cysteine methyltransferase (Thermococcus barophilus (strain DSM 11836 / MP)).